The chain runs to 421 residues: MASSSVPPATVSAATTGPGPGFGFASKTKKKHFVQQEVKVFRAADPLVGVFLWGVAHSINELSQVPPPVMLLPDDFKASSKIKVNNHLFHRENLPSHFKFKEYCPQVFRNLRDRFGIDDQDYLVSLTRNPPSESEGSDGRFLICYDRTLVIKEVSSEDIADMHSNLSNYHQYIVKCHGNTLLPQFLGMYRVSVDNEDSYMLVMRNMFSHRLPVHRKYDLKGSLVSREASDKEKVKELPTLKGMDFLNKNQKVYIGEDEKKIFLEKLKRDVEFLVQLKIMDYSLLLGIHDIIRGSEPEEEGPVREDESEVDGDCSLTGPPALVGSYGTSPEGIGGYIHSHRPLGPGEFESFIDVHAIRSAEGAPQKEVYFMGLIDILTQYDAKKKAAHAAKTVKHGAGAEISTVHPEQYAKRFLDFITNIFA.

Ala2 is modified (N-acetylalanine). Phosphoserine is present on Ser26. One can recognise a PIPK domain in the interval 43-420 (AADPLVGVFL…RFLDFITNIF (378 aa)). The interval 69-75 (VMLLPDD) is required for interaction with PIP5K1A. Ser349 bears the Phosphoserine mark.

In terms of assembly, interacts with PIP5K1A; the interaction inhibits PIP5K1A kinase activity. Phosphorylated, phosphorylation is induced by EGF.

It is found in the endoplasmic reticulum. It localises to the cytoplasm. It catalyses the reaction a 1,2-diacyl-sn-glycero-3-phospho-(1D-myo-inositol-5-phosphate) + ATP = a 1,2-diacyl-sn-glycero-3-phospho-(1D-myo-inositol-4,5-bisphosphate) + ADP + H(+). The catalysed reaction is 1,2-dihexadecanoyl-sn-glycero-3-phospho-(1D-myo-inositol-5-phosphate) + ATP = 1,2-dihexadecanoyl-sn-glycero-3-phospho-(1D-myo-inositol-4,5-bisphosphate) + ADP + H(+). The enzyme catalyses 1,2-dihexadecanoyl-sn-glycero-3-phospho-(1D-myo-inositol-5-phosphate) + GTP = 1,2-dihexadecanoyl-sn-glycero-3-phospho-(1D-myo-inositol-4,5-bisphosphate) + GDP + H(+). In terms of biological role, phosphatidylinositol 5-phosphate 4-kinase with low enzymatic activity. May be a GTP sensor, has higher GTP-dependent kinase activity than ATP-dependent kinase activity. PIP4Ks negatively regulate insulin signaling through a catalytic-independent mechanism. They interact with PIP5Ks and suppress PIP5K-mediated PtdIns(4,5)P2 synthesis and insulin-dependent conversion to PtdIns(3,4,5)P3. This is Phosphatidylinositol 5-phosphate 4-kinase type-2 gamma (PIP4K2C) from Pongo abelii (Sumatran orangutan).